We begin with the raw amino-acid sequence, 95 residues long: Small ribosomal subunit protein uS19 (95 aa).

This sequence belongs to the universal ribosomal protein uS19 family.

Protein S19 forms a complex with S13 that binds strongly to the 16S ribosomal RNA. The sequence is that of Small ribosomal subunit protein uS19 from Roseiflexus castenholzii (strain DSM 13941 / HLO8).